A 215-amino-acid polypeptide reads, in one-letter code: Transcription elongation factor A protein-like 4 (215 aa).

Met1 carries the N-acetylmethionine modification. Positions 1–133 (MEKLYSENEG…RKAKRKTNKG (133 aa)) are disordered. 3 positions are modified to phosphoserine: Ser6, Ser88, and Ser102. Over residues 25–102 (QDERKPEVTC…KPEIEGKPES (78 aa)) the composition is skewed to basic and acidic residues.

It belongs to the TFS-II family. TFA subfamily.

It localises to the nucleus. In terms of biological role, may be involved in transcriptional regulation. This Homo sapiens (Human) protein is Transcription elongation factor A protein-like 4 (TCEAL4).